We begin with the raw amino-acid sequence, 248 residues long: Triosephosphate isomerase (248 aa).

The substrate site is built by N10 and K12. Catalysis depends on H95, which acts as the Electrophile. Residue E165 is the Proton acceptor of the active site.

Belongs to the triosephosphate isomerase family. In terms of assembly, homodimer.

The catalysed reaction is D-glyceraldehyde 3-phosphate = dihydroxyacetone phosphate. The protein operates within carbohydrate biosynthesis; gluconeogenesis. It functions in the pathway carbohydrate degradation; glycolysis; D-glyceraldehyde 3-phosphate from glycerone phosphate: step 1/1. The protein is Triosephosphate isomerase (TPI1) of Eremothecium gossypii (strain ATCC 10895 / CBS 109.51 / FGSC 9923 / NRRL Y-1056) (Yeast).